The following is a 289-amino-acid chain: Elongation factor Ts (289 aa).

The tract at residues Thr82 to Leu85 is involved in Mg(2+) ion dislocation from EF-Tu.

Belongs to the EF-Ts family.

It localises to the cytoplasm. In terms of biological role, associates with the EF-Tu.GDP complex and induces the exchange of GDP to GTP. It remains bound to the aminoacyl-tRNA.EF-Tu.GTP complex up to the GTP hydrolysis stage on the ribosome. In Azotobacter vinelandii (strain DJ / ATCC BAA-1303), this protein is Elongation factor Ts.